A 363-amino-acid polypeptide reads, in one-letter code: Apelin receptor B (363 aa).

At 1–38 (MESEGFSATTEQYEYYDYANETGLQPCDETDWDFSYSL) the chain is on the extracellular side. The N-linked (GlcNAc...) asparagine glycan is linked to Asn20. 2 disulfides stabilise this stretch: Cys27/Cys287 and Cys109/Cys186. A helical transmembrane segment spans residues 39-59 (LPVFYMIVFVLGLSGNGVVIF). Residues 60-77 (TVWKAKPKRRSADTYIGN) lie on the Cytoplasmic side of the membrane. The helical transmembrane segment at 78-98 (LALADLAFVVTLPLWATYTAL) threads the bilayer. Over 99–111 (GFHWPFGSALCKL) the chain is Extracellular. Residues 112–132 (SSYLVLLNMFASVFCLTCLSF) form a helical membrane-spanning segment. At 133–152 (DRYLAIVHSLSSAKLRSRSS) the chain is on the cytoplasmic side. Residues 153–173 (ILVSLAVIWLFSGLLALPSLI) traverse the membrane as a helical segment. The Extracellular portion of the chain corresponds to 174–200 (LRDTRVEGNNTICDLDFSGVSSKENEN). An N-linked (GlcNAc...) asparagine glycan is attached at Asn182. A helical membrane pass occupies residues 201 to 221 (FWIGGLSILTTVPGFLLPLLL). Topologically, residues 222-249 (MTIFYCFIGGKVTMHFQNLKKEEQKKKR) are cytoplasmic. The helical transmembrane segment at 250–270 (LLKIIITLVVVFAICWLPFHI) threads the bilayer. At 271-297 (LKTIHFLDLMGFLELSCSAQNIIVSLH) the chain is on the extracellular side. A helical transmembrane segment spans residues 298-318 (PYATCLAYVNSCLNPFLYAFF). The Cytoplasmic segment spans residues 319–363 (DLRFRSQCFFFFGFKKVLQGHLSNTSSSLSAQTQKSEIHSLATKV).

The protein belongs to the G-protein coupled receptor 1 family. In terms of tissue distribution, expressed in all blood vessels including the posterior cardinal vein, intersomitic veins and the vitelline vein network.

It localises to the cell membrane. In terms of biological role, g protein-coupled receptor for peptide hormones apelin (apln) and apelin receptor early endogenous ligand (apela), that plays a role in the regulation of normal cardiovascular function and fluid homeostasis. When acting as apelin receptor, activates both G(i) protein pathway that inhibits adenylate cyclase activity, and the beta-arrestin pathway that promotes internalization of the receptor. Also functions as mechanoreceptor that is activated by pathological stimuli in a G-protein-independent fashion to induce beta-arrestin signaling, hence eliciting cardiac hypertrophy. However, the presence of apelin ligand blunts cardiac hypertrophic induction from APLNR/APJ on response to pathological stimuli. Plays a key role in early development such as gastrulation, blood vessels formation and heart morphogenesis by acting as a receptor for apela hormone, promoting endoderm and mesendoderm cell migration and regulating the migration of cells fated to become myocardial progenitors, respectively. Promotes angioblast migration toward the embryonic midline, i.e. the position of the future vessel formation, during vasculogenesis. May promote sinus venosus (SV)-derived endothelial cells migration into the developing heart to promote coronary blood vessel development. Required for cardiovascular development, particularly for intersomitic vein angiogenesis by acting as a receptor for apln hormone. Also plays a role in various processes in adults such as regulation of blood vessel formation, blood pressure, heart contractility, and heart failure. Acts upstream of the i/o type of G-alpha proteins in the differentiation of endothelium, erythroid cells, myeloid cells and cardiomyocytes. The sequence is that of Apelin receptor B (aplnr-b) from Xenopus laevis (African clawed frog).